Consider the following 217-residue polypeptide: MPHNKHTVYAITDATLMPTTASLCHRVELALRSGVTWLQYRDKSSNTSKRSEQAQALKALCQTYNAKLIINDDTALAKQVGADGVHLGQTDGCIVSARELLGPQAIIGSTCHASLELAERALAQGSSYVAFGRFFASNTKPNAAPAQLSLLAHAQQKFTCPIVAIGGITPSNGAQLLHAGATTLAVCHSLFADDNVEYRAKCLLGLTPNAEDALVTS.

Residues 39–43 and N71 each bind 4-amino-2-methyl-5-(diphosphooxymethyl)pyrimidine; that span reads QYRDK. The Mg(2+) site is built by D72 and D91. T110 provides a ligand contact to 4-amino-2-methyl-5-(diphosphooxymethyl)pyrimidine. Residue 137-139 coordinates 2-[(2R,5Z)-2-carboxy-4-methylthiazol-5(2H)-ylidene]ethyl phosphate; it reads SNT. A 4-amino-2-methyl-5-(diphosphooxymethyl)pyrimidine-binding site is contributed by K140. G167 contributes to the 2-[(2R,5Z)-2-carboxy-4-methylthiazol-5(2H)-ylidene]ethyl phosphate binding site.

It belongs to the thiamine-phosphate synthase family. Mg(2+) is required as a cofactor.

The enzyme catalyses 2-[(2R,5Z)-2-carboxy-4-methylthiazol-5(2H)-ylidene]ethyl phosphate + 4-amino-2-methyl-5-(diphosphooxymethyl)pyrimidine + 2 H(+) = thiamine phosphate + CO2 + diphosphate. It carries out the reaction 2-(2-carboxy-4-methylthiazol-5-yl)ethyl phosphate + 4-amino-2-methyl-5-(diphosphooxymethyl)pyrimidine + 2 H(+) = thiamine phosphate + CO2 + diphosphate. The catalysed reaction is 4-methyl-5-(2-phosphooxyethyl)-thiazole + 4-amino-2-methyl-5-(diphosphooxymethyl)pyrimidine + H(+) = thiamine phosphate + diphosphate. It functions in the pathway cofactor biosynthesis; thiamine diphosphate biosynthesis; thiamine phosphate from 4-amino-2-methyl-5-diphosphomethylpyrimidine and 4-methyl-5-(2-phosphoethyl)-thiazole: step 1/1. Its function is as follows. Condenses 4-methyl-5-(beta-hydroxyethyl)thiazole monophosphate (THZ-P) and 2-methyl-4-amino-5-hydroxymethyl pyrimidine pyrophosphate (HMP-PP) to form thiamine monophosphate (TMP). The chain is Thiamine-phosphate synthase from Saccharophagus degradans (strain 2-40 / ATCC 43961 / DSM 17024).